Here is a 31-residue protein sequence, read N- to C-terminus: HSQGMFTNDFSKYLEEEHAKEFVEWLKNGKS.

Belongs to the glucagon family.

The protein localises to the secreted. Glucagon plays a key role in glucose metabolism and homeostasis. Regulates blood glucose by increasing gluconeogenesis and decreasing glycolysis. This Huso dauricus (Kaluga sturgeon) protein is Glucagon-3.